A 751-amino-acid polypeptide reads, in one-letter code: Photosystem I P700 chlorophyll a apoprotein A1 (751 aa).

Transmembrane regions (helical) follow at residues 71-94, 157-180, 196-220, 292-310, 347-370, 386-412, 434-456, and 532-550; these read VFSAHFGQLSIIFLWLSGMYFHGA, LYCTAIGALIFASLMLFAGWFHYH, LNHHLAGLLGLGSLSWAGHQIHVSL, IAHHHLAIAILFLIAGHMY, WHAQLSLNLAMLGSTTIVVAHHMY, LSLFTHHMWIGGFLIVGAAAHAAIFMV, AIISHLNWVCIFLGFHSFGLYIH, and FLVHHIHAFTIHVTVLILL. Residues C574 and C583 each coordinate [4Fe-4S] cluster. 2 consecutive transmembrane segments (helical) span residues 590-611 and 665-687; these read HVFLGLFWMYNSISVVIFHFSW and LSAYGLFFLGAHFVWAFSLMFLF. Chlorophyll a' is bound at residue H676. The chlorophyll a site is built by M684 and Y692. W693 is a phylloquinone binding site. Residues 725-745 traverse the membrane as a helical segment; sequence AVGVTHYLLGGIATTWAFFLA.

The protein belongs to the PsaA/PsaB family. In terms of assembly, the PsaA/B heterodimer binds the P700 chlorophyll special pair and subsequent electron acceptors. PSI consists of a core antenna complex that captures photons, and an electron transfer chain that converts photonic excitation into a charge separation. The eukaryotic PSI reaction center is composed of at least 11 subunits. It depends on P700 is a chlorophyll a/chlorophyll a' dimer, A0 is one or more chlorophyll a, A1 is one or both phylloquinones and FX is a shared 4Fe-4S iron-sulfur center. as a cofactor.

The protein resides in the plastid. It is found in the chloroplast thylakoid membrane. It catalyses the reaction reduced [plastocyanin] + hnu + oxidized [2Fe-2S]-[ferredoxin] = oxidized [plastocyanin] + reduced [2Fe-2S]-[ferredoxin]. In terms of biological role, psaA and PsaB bind P700, the primary electron donor of photosystem I (PSI), as well as the electron acceptors A0, A1 and FX. PSI is a plastocyanin-ferredoxin oxidoreductase, converting photonic excitation into a charge separation, which transfers an electron from the donor P700 chlorophyll pair to the spectroscopically characterized acceptors A0, A1, FX, FA and FB in turn. Oxidized P700 is reduced on the lumenal side of the thylakoid membrane by plastocyanin. This is Photosystem I P700 chlorophyll a apoprotein A1 from Zea mays (Maize).